A 314-amino-acid polypeptide reads, in one-letter code: tRNA pseudouridine synthase B (314 aa).

Substrate is bound at residue histidine 43. Aspartate 48 functions as the Nucleophile in the catalytic mechanism. Residues tyrosine 76, tyrosine 179, and leucine 200 each coordinate substrate.

It belongs to the pseudouridine synthase TruB family. Type 1 subfamily.

It carries out the reaction uridine(55) in tRNA = pseudouridine(55) in tRNA. Its function is as follows. Responsible for synthesis of pseudouridine from uracil-55 in the psi GC loop of transfer RNAs. This chain is tRNA pseudouridine synthase B, found in Escherichia coli O139:H28 (strain E24377A / ETEC).